Consider the following 724-residue polypeptide: Hyaluronan mediated motility receptor (724 aa).

Disordered stretches follow at residues methionine 1–glycine 22 and lysine 40–aspartate 81. Serine 20 carries the phosphoserine modification. Basic and acidic residues-rich tracts occupy residues glutamine 46–threonine 60 and lysine 70–aspartate 81. Asparagine 133, asparagine 477, asparagine 567, and asparagine 588 each carry an N-linked (GlcNAc...) asparagine glycan. Residues glutamate 365–glutamine 546 form a required for interaction with FAM83D region. 2 hyaluronic acid-binding regions span residues lysine 635–lysine 645 and lysine 657–lysine 666. Threonine 703 is modified (phosphothreonine).

As to quaternary structure, interacts with ANKRD26. Interacts with DYNLL1. Interacts with FAM83D/CHICA. As to expression, expressed in testis. Expressed in the breast.

Its subcellular location is the cell surface. The protein resides in the cytoplasm. It localises to the cytoskeleton. It is found in the spindle. Functionally, receptor for hyaluronic acid (HA). Involved in cell motility. When hyaluronan binds to HMMR, the phosphorylation of a number of proteins, including PTK2/FAK1 occurs. May also be involved in cellular transformation and metastasis formation, and in regulating extracellular-regulated kinase (ERK) activity. May act as a regulator of adipogenisis. In Homo sapiens (Human), this protein is Hyaluronan mediated motility receptor (HMMR).